A 453-amino-acid chain; its full sequence is Serine incorporator 1 (453 aa).

Gly-2 carries the N-myristoyl glycine lipid modification. The Cytoplasmic segment spans residues 2–39 (GSVLGLCSVASWIPCLCGSAPCLLCRCCPSGNNSTVTR). Residues 40 to 60 (LIYALFLLVGVCVACVMLIPG) form a helical membrane-spanning segment. The Lumenal portion of the chain corresponds to 61-88 (MEEQLNKIPGFCENEKGVVPCNILVGYK). A helical membrane pass occupies residues 89-109 (AVYRLCFGLAMFYLLLSLLMI). Residues 110–123 (KVKSSSDPRAAVHN) are Cytoplasmic-facing. A helical transmembrane segment spans residues 124 to 144 (GFWFFKFATAVAIIIGAFFIP). The Lumenal segment spans residues 145–151 (EGTFTTV). The chain crosses the membrane as a helical span at residues 152–172 (WFYVGMAGAFCFILIQLVLLI). The Cytoplasmic portion of the chain corresponds to 173 to 197 (DFAHSWNESWVEKMEEGNSRCWYAA). Residues 198-218 (LLSATALNYLLSLVAVVLFFV) form a helical membrane-spanning segment. The Lumenal segment spans residues 219–231 (YYTHPASCAENKA). A helical transmembrane segment spans residues 232 to 252 (FISVNMLLCIGASVMSILPKI). At 253–259 (QESQPRS) the chain is on the cytoplasmic side. A helical transmembrane segment spans residues 260-280 (GLLQSSVITVYTMYLTWSAMT). Residues 281–309 (NEPETNCNPSLLSIIGFNTTRPIPKDGQS) are Lumenal-facing. The helical transmembrane segment at 310–330 (VQWWHPQGIIGLVLFLLCVFY) threads the bilayer. Topologically, residues 331 to 387 (SSIRTSNNSQVNKLTLTSDESTLIEDGNGRSDGSLDDGDGIHRAVDNERDGVTYSYS) are cytoplasmic. Phosphoserine is present on Ser-351. The residue at position 352 (Thr-352) is a Phosphothreonine. A phosphoserine mark is found at Ser-361 and Ser-364. Residues 388-408 (FFHFMLFLASLYIMMTLTNWY) form a helical membrane-spanning segment. Residues 409-426 (RYEPSREMKSQWTAVWVK) lie on the Lumenal side of the membrane. Residues 427–447 (ISSSWIGLVLYVWTLVAPLVL) form a helical membrane-spanning segment. The Cytoplasmic segment spans residues 448–453 (TNRDFD).

Belongs to the TDE1 family. Interacts with SPTLC1. Highly expressed in the neuronal populations such as Purkinje cells in the cerebellum, brainstem and spinal motor neurons, locus coeruleus and raphe nuclei.

It is found in the endoplasmic reticulum membrane. In terms of biological role, enhances the incorporation of serine into phosphatidylserine and sphingolipids. The polypeptide is Serine incorporator 1 (Serinc1) (Mus musculus (Mouse)).